The sequence spans 468 residues: Siroheme synthase (468 aa).

Residues 1–202 form a precorrin-2 dehydrogenase /sirohydrochlorin ferrochelatase region; the sequence is MDYLPLFARL…EQHDSAEQWM (202 aa). Residues 22–23 and 43–44 each bind NAD(+); these read DI and PS. Phosphoserine is present on S126. Positions 214–468 are uroporphyrinogen-III C-methyltransferase; sequence GEIVLVGAGP…SGKEHLINLA (255 aa). An S-adenosyl-L-methionine-binding site is contributed by P223. D246 acts as the Proton acceptor in catalysis. K268 serves as the catalytic Proton donor. Residues 299–301, 329–330, M381, and G410 each bind S-adenosyl-L-methionine; these read GGD and TA.

In the N-terminal section; belongs to the precorrin-2 dehydrogenase / sirohydrochlorin ferrochelatase family. It in the C-terminal section; belongs to the precorrin methyltransferase family.

The enzyme catalyses uroporphyrinogen III + 2 S-adenosyl-L-methionine = precorrin-2 + 2 S-adenosyl-L-homocysteine + H(+). The catalysed reaction is precorrin-2 + NAD(+) = sirohydrochlorin + NADH + 2 H(+). It catalyses the reaction siroheme + 2 H(+) = sirohydrochlorin + Fe(2+). The protein operates within cofactor biosynthesis; adenosylcobalamin biosynthesis; precorrin-2 from uroporphyrinogen III: step 1/1. It functions in the pathway cofactor biosynthesis; adenosylcobalamin biosynthesis; sirohydrochlorin from precorrin-2: step 1/1. It participates in porphyrin-containing compound metabolism; siroheme biosynthesis; precorrin-2 from uroporphyrinogen III: step 1/1. Its pathway is porphyrin-containing compound metabolism; siroheme biosynthesis; siroheme from sirohydrochlorin: step 1/1. The protein operates within porphyrin-containing compound metabolism; siroheme biosynthesis; sirohydrochlorin from precorrin-2: step 1/1. Functionally, multifunctional enzyme that catalyzes the SAM-dependent methylations of uroporphyrinogen III at position C-2 and C-7 to form precorrin-2 via precorrin-1. Then it catalyzes the NAD-dependent ring dehydrogenation of precorrin-2 to yield sirohydrochlorin. Finally, it catalyzes the ferrochelation of sirohydrochlorin to yield siroheme. The chain is Siroheme synthase from Tolumonas auensis (strain DSM 9187 / NBRC 110442 / TA 4).